The chain runs to 616 residues: Mitochondrial Rho GTPase 2 (616 aa).

Residues 1-590 (MKRDVRILLL…HDTELSTASF (590 aa)) lie on the Cytoplasmic side of the membrane. The 167-residue stretch at 2–168 (KRDVRILLLG…FYYAQKAVLH (167 aa)) folds into the Miro 1 domain. 4 residues coordinate GTP: G16, K17, T18, and S19. T18 provides a ligand contact to Mg(2+). D57 is a binding site for Mg(2+). GTP is bound by residues S59, N118, K119, D121, A149, and K150. EF-hand domains follow at residues 184–219 (QCKKALTRIFTISEQDNNQILSDEELNFFQQSCFGN) and 304–339 (FGYQFLQKAFEKHDLDEDGALSPSELQSFFSVFPYT). 7 residues coordinate Ca(2+): D199, N201, E208, D317, D319, D321, and E328. The region spanning 416-577 (RNVFLCRVIG…YSKLATAAAF (162 aa)) is the Miro 2 domain. G428, G430, K431, S432, and A433 together coordinate GTP. Position 432 (S432) interacts with Mg(2+). Position 474 (E474) interacts with Mg(2+). Residues K528, D530, and C559 each contribute to the GTP site. A helical; Anchor for type IV membrane protein transmembrane segment spans residues 591 to 613 (WLRVALGATVAAVVGFTLYKALL). At 614–616 (RSK) the chain is on the mitochondrial intermembrane side.

It belongs to the mitochondrial Rho GTPase family. As to quaternary structure, homodimer.

Its subcellular location is the mitochondrion outer membrane. It carries out the reaction GTP + H2O = GDP + phosphate + H(+). The catalysed reaction is ATP + H2O = ADP + phosphate + H(+). The enzyme catalyses UTP + H2O = UDP + phosphate + H(+). Atypical mitochondrial nucleoside-triphosphatase (NTPase) involved in mitochondrial trafficking. Probably involved in control of anterograde transport of mitochondria and their subcellular distribution. Can hydrolyze GTP, ATP and UTP. This is Mitochondrial Rho GTPase 2 (rhot2) from Xenopus tropicalis (Western clawed frog).